A 498-amino-acid polypeptide reads, in one-letter code: tRNA-guanine(15) transglycosylase (498 aa).

The active-site Nucleophile is the D85. D120 contacts substrate. Residues C275, C277, and C280 each coordinate Zn(2+).

This sequence belongs to the archaeosine tRNA-ribosyltransferase family. The cofactor is Zn(2+).

It catalyses the reaction guanosine(15) in tRNA + 7-cyano-7-deazaguanine = 7-cyano-7-carbaguanosine(15) in tRNA + guanine. Its pathway is tRNA modification; archaeosine-tRNA biosynthesis. Functionally, exchanges the guanine residue with 7-cyano-7-deazaguanine (preQ0) at position 15 in the dihydrouridine loop (D-loop) of archaeal tRNAs. The chain is tRNA-guanine(15) transglycosylase from Sulfolobus acidocaldarius (strain ATCC 33909 / DSM 639 / JCM 8929 / NBRC 15157 / NCIMB 11770).